A 253-amino-acid chain; its full sequence is (S)-2-haloacid dehalogenase (253 aa).

Asp-8 acts as the Nucleophile in catalysis. An (S)-2-haloacid is bound by residues 9-10 (AY), Arg-39, and 114-115 (SN). Positions 171 to 176 (SSNGFD) are important for catalytic activity.

The protein belongs to the HAD-like hydrolase superfamily. S-2-haloalkanoic acid dehalogenase family. In terms of assembly, homodimer.

It carries out the reaction an (S)-2-haloacid + H2O = a (2R)-2-hydroxycarboxylate + a halide anion + H(+). The catalysed reaction is (S)-2-chloropropanoate + H2O = (R)-lactate + chloride + H(+). Its function is as follows. Catalyzes the hydrolytic dehalogenation of small (S)-2-haloalkanoic acids to yield the corresponding (R)-2-hydroxyalkanoic acids. Acts on acids of short chain lengths, C(2) to C(4), with inversion of configuration at C-2. Active with 2-halogenated carboxylic acids and converts only the S-isomer (or L-isomer) of 2-chloropropionic acid with inversion of configuration to produce R-lactate (or D-isomer). The polypeptide is (S)-2-haloacid dehalogenase (Xanthobacter autotrophicus).